Reading from the N-terminus, the 472-residue chain is 2-oxoisovalerate dehydrogenase subunit alpha 2, mitochondrial (472 aa).

185-187 (QYR) provides a ligand contact to thiamine diphosphate. K(+)-binding residues include Ser-234, Thr-239, and Gln-240.

It belongs to the BCKDHA family. In terms of assembly, heterotetramer of alpha and beta chains. Requires thiamine diphosphate as cofactor.

Its subcellular location is the mitochondrion matrix. It carries out the reaction N(6)-[(R)-lipoyl]-L-lysyl-[protein] + 3-methyl-2-oxobutanoate + H(+) = N(6)-[(R)-S(8)-2-methylpropanoyldihydrolipoyl]-L-lysyl-[protein] + CO2. In terms of biological role, the branched-chain alpha-keto dehydrogenase complex catalyzes the overall conversion of alpha-keto acids to acyl-CoA and CO(2). It contains multiple copies of three enzymatic components: branched-chain alpha-keto acid decarboxylase (E1), lipoamide acyltransferase (E2) and lipoamide dehydrogenase (E3). The chain is 2-oxoisovalerate dehydrogenase subunit alpha 2, mitochondrial from Arabidopsis thaliana (Mouse-ear cress).